Here is a 147-residue protein sequence, read N- to C-terminus: Hemoglobin subunit epsilon (147 aa).

In terms of domain architecture, Globin spans 3–147; it reads HFTAEEKAAI…VAIALGHKYH (145 aa). A phosphoserine mark is found at Ser-14 and Ser-51. The heme b site is built by His-64 and His-93.

Belongs to the globin family. Heterotetramer of two alpha chains and two epsilon chains in early embryonic hemoglobin Gower-2; two zeta chains and two epsilon chains in early embryonic hemoglobin Gower-1. Red blood cells.

Its function is as follows. The epsilon chain is a beta-type chain of early mammalian embryonic hemoglobin. This is Hemoglobin subunit epsilon (HBE1) from Pithecia irrorata (Gray monk saki).